The primary structure comprises 420 residues: UDP-N-acetyl-D-mannosamine dehydrogenase (420 aa).

NAD(+) contacts are provided by tyrosine 13, isoleucine 14, aspartate 33, threonine 85, and threonine 126. UDP-N-acetyl-alpha-D-mannosaminouronate is bound by residues arginine 160, valine 161, lysine 212, asparagine 216, arginine 219, histidine 250, arginine 252, and glycine 263. The active-site Proton donor/acceptor is the lysine 212. The active-site Nucleophile is the cysteine 266. UDP-N-acetyl-alpha-D-mannosaminouronate-binding residues include phenylalanine 330 and lysine 331. An NAD(+)-binding site is contributed by arginine 338. Lysine 416 lines the UDP-N-acetyl-alpha-D-mannosaminouronate pocket.

The protein belongs to the UDP-glucose/GDP-mannose dehydrogenase family. WecC subfamily. As to quaternary structure, homodimer.

The enzyme catalyses UDP-N-acetyl-alpha-D-mannosamine + 2 NAD(+) + H2O = UDP-N-acetyl-alpha-D-mannosaminouronate + 2 NADH + 3 H(+). The protein operates within bacterial outer membrane biogenesis; enterobacterial common antigen biosynthesis. In terms of biological role, catalyzes the four-electron oxidation of UDP-N-acetyl-D-mannosamine (UDP-ManNAc), reducing NAD(+) and releasing UDP-N-acetylmannosaminuronic acid (UDP-ManNAcA). This Salmonella typhi protein is UDP-N-acetyl-D-mannosamine dehydrogenase.